We begin with the raw amino-acid sequence, 90 residues long: Acylphosphatase (90 aa).

Positions 4 to 90 constitute an Acylphosphatase-like domain; the sequence is TRRVRFYGRV…TEFQDFQIKR (87 aa). Active-site residues include R19 and N37.

This sequence belongs to the acylphosphatase family.

The catalysed reaction is an acyl phosphate + H2O = a carboxylate + phosphate + H(+). The sequence is that of Acylphosphatase (acyP) from Thermoplasma volcanium (strain ATCC 51530 / DSM 4299 / JCM 9571 / NBRC 15438 / GSS1).